Consider the following 588-residue polypeptide: Proline--tRNA ligase (588 aa).

This sequence belongs to the class-II aminoacyl-tRNA synthetase family. ProS type 1 subfamily. As to quaternary structure, homodimer.

The protein resides in the cytoplasm. It catalyses the reaction tRNA(Pro) + L-proline + ATP = L-prolyl-tRNA(Pro) + AMP + diphosphate. Catalyzes the attachment of proline to tRNA(Pro) in a two-step reaction: proline is first activated by ATP to form Pro-AMP and then transferred to the acceptor end of tRNA(Pro). As ProRS can inadvertently accommodate and process non-cognate amino acids such as alanine and cysteine, to avoid such errors it has two additional distinct editing activities against alanine. One activity is designated as 'pretransfer' editing and involves the tRNA(Pro)-independent hydrolysis of activated Ala-AMP. The other activity is designated 'posttransfer' editing and involves deacylation of mischarged Ala-tRNA(Pro). The misacylated Cys-tRNA(Pro) is not edited by ProRS. The sequence is that of Proline--tRNA ligase from Helicobacter hepaticus (strain ATCC 51449 / 3B1).